The sequence spans 88 residues: Kunitz-type U15-theraphotoxin-Hhn1p (88 aa).

Residues 1–27 (MGIARILSAVLFLSVLFVVTFPTLLSA) form the signal peptide. Positions 28 to 33 (DHHDGR) are excised as a propeptide. In terms of domain architecture, BPTI/Kunitz inhibitor spans 37–85 (CRLPSDRGRCKASFERWYFNGTTCTKFVYGGYGGNDNRFPTEKACMKRC). Cystine bridges form between Cys-37/Cys-85 and Cys-60/Cys-81.

This sequence belongs to the venom Kunitz-type family. 01 (intermediate) subfamily. Expressed by the venom gland.

It is found in the secreted. Functionally, serine protease inhibitor that inhibits trypsin at a molar ratio of 1:1. The polypeptide is Kunitz-type U15-theraphotoxin-Hhn1p (Cyriopagopus hainanus (Chinese bird spider)).